Consider the following 196-residue polypeptide: GTP cyclohydrolase 1 (196 aa).

3 residues coordinate Zn(2+): Cys86, His89, and Cys158.

It belongs to the GTP cyclohydrolase I family. As to quaternary structure, toroid-shaped homodecamer, composed of two pentamers of five dimers.

The enzyme catalyses GTP + H2O = 7,8-dihydroneopterin 3'-triphosphate + formate + H(+). Its pathway is cofactor biosynthesis; 7,8-dihydroneopterin triphosphate biosynthesis; 7,8-dihydroneopterin triphosphate from GTP: step 1/1. This is GTP cyclohydrolase 1 from Clostridium botulinum (strain ATCC 19397 / Type A).